We begin with the raw amino-acid sequence, 693 residues long: CREB-regulated transcription coactivator 2 (693 aa).

A compositionally biased stretch (polar residues) spans 1–20 (MATSGANGPGSATASASNPR). Residues 1–30 (MATSGANGPGSATASASNPRKFSEKIALQK) are disordered. Alanine 2 bears the N-acetylalanine mark. Asymmetric dimethylarginine; by PRMT6 is present on arginine 51. Residues serine 70, serine 86, and serine 90 each carry the phosphoserine modification. 3 positions are modified to asymmetric dimethylarginine; by PRMT6: arginine 99, arginine 120, and arginine 123. Serine 136 is modified (phosphoserine). Residues arginine 161 and arginine 168 each carry the asymmetric dimethylarginine; by PRMT6 modification. At threonine 169 the chain carries Phosphothreonine. Serine 171 bears the Phosphoserine; by AMPK, MARK2, SIK1 and SIK2 mark. Threonine 192 carries the phosphothreonine modification. Residue lysine 234 forms a Glycyl lysine isopeptide (Lys-Gly) (interchain with G-Cter in SUMO2) linkage. The Nuclear export signal signature appears at 271 to 287 (TGGSLPDLTNLHFPPPL). Position 274 is a phosphoserine; by MARK2 (serine 274). Disordered stretches follow at residues 282-306 (HFPPPLPTPLDPEETAYPSLSGGNS) and 328-554 (GYDA…MSDF). 5 positions are modified to phosphoserine: serine 306, serine 368, serine 393, serine 433, and serine 456. Low complexity-rich tracts occupy residues 331-378 (APGL…SSLA) and 386-415 (SLGHPSLSAPALSSSSSSSSTSSPVLGAPS). Polar residues predominate over residues 447–468 (SQQQLPKQFSPTMSPTLSSITQ). Tyrosine 488 carries the post-translational modification Phosphotyrosine. Phosphoserine is present on residues serine 489, serine 490, and serine 492. The segment covering 498-507 (QPHTPKSLQQ) has biased composition (polar residues). Position 501 is a phosphothreonine (threonine 501). The span at 509 to 529 (GLPSQSCSVQSSGGQPPGRQS) shows a compositional bias: low complexity. A phosphoserine mark is found at serine 613, serine 623, and serine 624.

This sequence belongs to the TORC family. Binds, as a tetramer, through its N-terminal region, with the bZIP domain of CREB1. 'Arg-314' in the bZIP domain of CREB1 is essential for this interaction. Interaction, via its C-terminal, with TAF4, enhances recruitment of TAF4 to CREB1. Interacts with SIK2. Interacts with 14-3-3 proteins, YWHAB and YWHAG. Interacts (probably when phosphorylated at Ser-171) with YWHAE. Interacts with calmodulin-dependent catalytic subunit PPP3CA/calcineurin A. Interaction with COP1 mediates nuclear export and degradation of CRTC2. As to quaternary structure, (Microbial infection) Interaction with the human T-cell leukemia virus type 1 (HTLV-1) Tax protein is essential for optimal transcription activation by Tax. Post-translationally, phosphorylation/dephosphorylation states of Ser-171 are required for regulating transduction of CREB activity. CRTCs/TORCs are inactive when phosphorylated, and active when dephosphorylated at this site. This primary site of phosphorylation, is regulated by cAMP and calcium levels and is dependent on the phosphorylation of SIKs (SIK1 and SIK2) by LKB1. Following adenylyl cyclase activation, dephosphorylated at Ser-171 by PPP3CA/calcineurin A resulting in CRTC2 dissociation from 14-3-3 proteins and PPP3CA. Both insulin and AMPK increase this phosphorylation of CRTC2 while glucagon suppresses it. Phosphorylation at Ser-274 by MARK2 is induced under low glucose conditions and dephosphorylated in response to glucose influx. Phosphorylation at Ser-274 promotes interaction with 14-3-3 proteins and translocation to the cytoplasm. In terms of processing, asymmetric dimethylation of arginine resisues by PRMT6 enhances the association of CRTC2 with CREB on the promoters of gluconeogenic genes. As to expression, most abundantly expressed in the thymus. Present in both B and T-lymphocytes. Highly expressed in HEK293T cells and in insulinomas. High levels also in spleen, ovary, muscle and lung, with highest levels in muscle. Lower levels found in brain, colon, heart, kidney, prostate, small intestine and stomach. Weak expression in liver and pancreas.

The protein resides in the cytoplasm. Its subcellular location is the nucleus. Its function is as follows. Transcriptional coactivator for CREB1 which activates transcription through both consensus and variant cAMP response element (CRE) sites. Acts as a coactivator, in the SIK/TORC signaling pathway, being active when dephosphorylated and acts independently of CREB1 'Ser-133' phosphorylation. Enhances the interaction of CREB1 with TAF4. Regulates gluconeogenesis as a component of the LKB1/AMPK/TORC2 signaling pathway. Regulates the expression of specific genes such as the steroidogenic gene, StAR. Potent coactivator of PPARGC1A and inducer of mitochondrial biogenesis in muscle cells. Also coactivator for TAX activation of the human T-cell leukemia virus type 1 (HTLV-1) long terminal repeats (LTR). The sequence is that of CREB-regulated transcription coactivator 2 (CRTC2) from Homo sapiens (Human).